The sequence spans 225 residues: Chlorosome protein J (225 aa).

The region spanning 1–95 (MIIYINDKPC…TIRVLTRAEK (95 aa)) is the 2Fe-2S ferredoxin-type domain. [2Fe-2S] cluster contacts are provided by C33, C39, C42, and C77.

[2Fe-2S] cluster is required as a cofactor.

It is found in the chlorosome. Could play a direct role in the oxidation or reduction of the quenching species formed in the chlorosome. This is Chlorosome protein J (csmJ) from Chlorobaculum tepidum (strain ATCC 49652 / DSM 12025 / NBRC 103806 / TLS) (Chlorobium tepidum).